Here is a 558-residue protein sequence, read N- to C-terminus: Dihydroxy-acid dehydratase (558 aa).

Cys50 lines the [2Fe-2S] cluster pocket. Asp82 is a Mg(2+) binding site. Cys123 contributes to the [2Fe-2S] cluster binding site. Residues Asp124 and Lys125 each contribute to the Mg(2+) site. N6-carboxylysine is present on Lys125. Residue Cys195 coordinates [2Fe-2S] cluster. Glu447 contributes to the Mg(2+) binding site. Ser472 functions as the Proton acceptor in the catalytic mechanism.

The protein belongs to the IlvD/Edd family. Homodimer. It depends on [2Fe-2S] cluster as a cofactor. Mg(2+) serves as cofactor.

It carries out the reaction (2R)-2,3-dihydroxy-3-methylbutanoate = 3-methyl-2-oxobutanoate + H2O. The enzyme catalyses (2R,3R)-2,3-dihydroxy-3-methylpentanoate = (S)-3-methyl-2-oxopentanoate + H2O. It functions in the pathway amino-acid biosynthesis; L-isoleucine biosynthesis; L-isoleucine from 2-oxobutanoate: step 3/4. The protein operates within amino-acid biosynthesis; L-valine biosynthesis; L-valine from pyruvate: step 3/4. In terms of biological role, functions in the biosynthesis of branched-chain amino acids. Catalyzes the dehydration of (2R,3R)-2,3-dihydroxy-3-methylpentanoate (2,3-dihydroxy-3-methylvalerate) into 2-oxo-3-methylpentanoate (2-oxo-3-methylvalerate) and of (2R)-2,3-dihydroxy-3-methylbutanoate (2,3-dihydroxyisovalerate) into 2-oxo-3-methylbutanoate (2-oxoisovalerate), the penultimate precursor to L-isoleucine and L-valine, respectively. The polypeptide is Dihydroxy-acid dehydratase (Saccharolobus islandicus (strain M.16.27) (Sulfolobus islandicus)).